We begin with the raw amino-acid sequence, 284 residues long: MSNSVTNFEMSSVLPGKKPCQGKNNESQVVQTTPIKKHSVTFKNQSSLGVIDHYARLTNKSHSSVIAEVVDLAIPILEKCNRHNWSINEIKNDLLKFSIKESINRSRGKTEVTLEEYCSLIWKTNIMSPLKIPIADYFQLNANDEFMGKDEKTVIRERLSSLRENYDMEKAIYIYNQRHFDVKHQSVSGYSNIILIHRTTFEGYYFDAGQALLLSTSQLIIFGINEVLRRKGIVMPYPVVCWIDIYHVNEMVVMLPVLRKTDVSNRVNVPDDIIINPYSQESRT.

The span at 1 to 10 (MSNSVTNFEM) shows a compositional bias: polar residues. Positions 1–28 (MSNSVTNFEMSSVLPGKKPCQGKNNESQ) are disordered.

This is an uncharacterized protein from Escherichia coli (strain K12).